The primary structure comprises 108 residues: Peptidyl-prolyl cis-trans isomerase FKBP1B (108 aa).

The PPIase FKBP-type domain maps to 20-108; sequence GQICVVHYTG…IFDVELLNLE (89 aa).

Belongs to the FKBP-type PPIase family. FKBP1 subfamily. As to quaternary structure, identified in a complex composed of RYR2, FKBP1B, PKA catalytic subunit, PRKAR2A, AKAP6, and the protein phosphatases PP2A and PP1. Interacts directly with RYR2. Detected in heart muscle (at protein level). Ubiquitous.

Its subcellular location is the cytoplasm. The protein localises to the sarcoplasmic reticulum. It carries out the reaction [protein]-peptidylproline (omega=180) = [protein]-peptidylproline (omega=0). Its activity is regulated as follows. Inhibited by both FK506 and rapamycin. Functionally, has the potential to contribute to the immunosuppressive and toxic effects of FK506 and rapamycin. PPIases accelerate the folding of proteins. It catalyzes the cis-trans isomerization of proline imidic peptide bonds in oligopeptides. The polypeptide is Peptidyl-prolyl cis-trans isomerase FKBP1B (Fkbp1b) (Rattus norvegicus (Rat)).